A 168-amino-acid polypeptide reads, in one-letter code: Small ribosomal subunit protein uS8 (168 aa).

The segment at 59–93 (EEFKKMKELAEKSPNPKMRRYLQQLIDYNKGTQYP) is not found in other S8 sequences.

This sequence belongs to the universal ribosomal protein uS8 family. As to quaternary structure, part of the 30S ribosomal subunit. Contacts proteins S5 and S12.

Its function is as follows. One of the primary rRNA binding proteins, it binds directly to 16S rRNA central domain where it helps coordinate assembly of the platform of the 30S subunit. The polypeptide is Small ribosomal subunit protein uS8 (Aquifex pyrophilus).